Here is a 906-residue protein sequence, read N- to C-terminus: Formin-like protein 16 (906 aa).

An N-terminal signal peptide occupies residues 1–28 (MAPAPSPTPLPLFLLLLLLVGVAPLAAA). A disordered region spans residues 34-76 (QTRFPSTRTPAFATPPPITSPSPSPGTPTATPSSSPPSSSGKR). The segment covering 46 to 59 (ATPPPITSPSPSPG) has biased composition (pro residues). The segment covering 60 to 73 (TPTATPSSSPPSSS) has biased composition (low complexity). A helical membrane pass occupies residues 81 to 101 (VAVVSTALSSFAVSGLAFFLF). Disordered stretches follow at residues 113–149 (AGGAGQHYGGAQGGALTGKRPEREPKRPARGNMVDEN), 161–223 (KEGD…SLDS), 250–404 (AYAR…DQQA), 451–474 (RKTKPADSKDASGGSTSAGLGRSN), 677–702 (GSLAKSTDGGNPAASSTSQGPSREER), and 834–906 (LQQQ…SDEE). A compositionally biased stretch (gly residues) spans 114–128 (GGAGQHYGGAQGGAL). The segment covering 174-185 (SRRPPQPPPPRP) has biased composition (pro residues). Over residues 186 to 196 (YRAERRQDAHE) the composition is skewed to basic and acidic residues. A compositionally biased stretch (pro residues) spans 270 to 294 (SPSPAPAPAARPASPSPSLPLPPGR). Positions 295-310 (ESPSRPQSIAAAAVAS) are enriched in low complexity. The span at 311–383 (PAPPPPPPPK…KGGPPPPPPK (73 aa)) shows a compositional bias: pro residues. Residues 396 to 849 (PTGSADQQAK…PTPPPSSSQP (454 aa)) enclose the FH2 domain. 2 stretches are compositionally biased toward polar residues: residues 463–474 (GGSTSAGLGRSN) and 677–697 (GSLAKSTDGGNPAASSTSQGP). The segment covering 847-866 (SQPAAPAATTKGAADDAPAP) has biased composition (low complexity).

Belongs to the formin-like family. Class-I subfamily.

It is found in the membrane. This is Formin-like protein 16 (FH16) from Oryza sativa subsp. japonica (Rice).